Consider the following 200-residue polypeptide: Small ribosomal subunit protein uS4 (200 aa).

The tract at residues 22 to 43 (TGKELERRPYAPGQHGPTQRKK) is disordered. One can recognise an S4 RNA-binding domain in the interval 92-170 (QRLDNIVYRL…VPEYVTFDAE (79 aa)).

Belongs to the universal ribosomal protein uS4 family. In terms of assembly, part of the 30S ribosomal subunit. Contacts protein S5. The interaction surface between S4 and S5 is involved in control of translational fidelity.

Functionally, one of the primary rRNA binding proteins, it binds directly to 16S rRNA where it nucleates assembly of the body of the 30S subunit. In terms of biological role, with S5 and S12 plays an important role in translational accuracy. This Listeria monocytogenes serovar 1/2a (strain ATCC BAA-679 / EGD-e) protein is Small ribosomal subunit protein uS4.